Consider the following 488-residue polypeptide: MNLAEICENAKKGREYALLGNYDSSMVYYQGVIQQIQRHCQSLRDPATKAKWQQVRQELLEEYEQVKSIVSTLESFKMDKPPDFPVSCRDEPFRDPAVWPPPVPAEHRAPPQIRRPNREVRPLRKDVGAGARGLVGRAHQISKSDKPASRDKDYRARGRDDKARKNVQDGASDSEIPKFDGAGYDKDLVEALERDIVSRNPSIHWDDIADLEEAKKLLREAVVLPMWMPDFFKGIRRPWKGVLMVGPPGTGKTMLAKAVATECGTTFFNVSSSTLTSKYRGESEKLVRLLFEMARFYAPTTIFIDEIDSICSRRGTSDEHEASRRVKSELLIQMDGVGGALENDDPSKMVMVLAATNFPWDIDEALRRRLEKRIYIPLPTAKGRAELLKISLREVELDPDVHLEDIADKTEGYSGADITNICRDASLMAMRRRINGLSPEEIRALSKEELQMPVTRGDLELALKKIAKSVSAADLEKYEKWMVEFGSA.

An N-acetylmethionine modification is found at M1. The tract at residues 95 to 179 (DPAVWPPPVP…GASDSEIPKF (85 aa)) is disordered. A compositionally biased stretch (basic and acidic residues) spans 116 to 127 (PNREVRPLRKDV). The segment covering 128–138 (GAGARGLVGRA) has biased composition (low complexity). Residues 142-167 (SKSDKPASRDKDYRARGRDDKARKNV) are compositionally biased toward basic and acidic residues. S172 bears the Phosphoserine mark. 246–253 (GPPGTGKT) is an ATP binding site.

This sequence belongs to the AAA ATPase family. Katanin p60 subunit A1 subfamily. A-like 1 sub-subfamily. Interacts with KATNB1 and KATNBL1. As to expression, widely expressed, including in testis, brain, heart, lung, kidney, liver, spleen, seminal vesicles and ovary. In testis, restricted to Sertoli cells within the seminiferous epithelium (at protein level).

The protein localises to the cytoplasm. It localises to the cytoskeleton. It is found in the spindle pole. The protein resides in the spindle. It carries out the reaction n ATP + n H2O + a microtubule = n ADP + n phosphate + (n+1) alpha/beta tubulin heterodimers.. Regulates microtubule dynamics in Sertoli cells, a process that is essential for spermiogenesis and male fertility. Severs microtubules in an ATP-dependent manner, promoting rapid reorganization of cellular microtubule arrays. Has microtubule-severing activity in vitro. The sequence is that of Katanin p60 ATPase-containing subunit A-like 1 (Katnal1) from Mus musculus (Mouse).